A 603-amino-acid polypeptide reads, in one-letter code: Chaperone protein DnaK (603 aa).

T175 bears the Phosphothreonine; by autocatalysis mark. Low complexity predominate over residues 573–586 (AQQAQQQNPDNQNN). The tract at residues 573–603 (AQQAQQQNPDNQNNNKDDVTEATVTDDSTKK) is disordered. Positions 594-603 (ATVTDDSTKK) are enriched in polar residues.

The protein belongs to the heat shock protein 70 family.

Acts as a chaperone. This is Chaperone protein DnaK from Ureaplasma parvum serovar 3 (strain ATCC 27815 / 27 / NCTC 11736).